The primary structure comprises 310 residues: Homoserine kinase (310 aa).

An ATP-binding site is contributed by 91 to 101; that stretch reads PIGSGLGSSAC.

It belongs to the GHMP kinase family. Homoserine kinase subfamily.

Its subcellular location is the cytoplasm. It catalyses the reaction L-homoserine + ATP = O-phospho-L-homoserine + ADP + H(+). Its pathway is amino-acid biosynthesis; L-threonine biosynthesis; L-threonine from L-aspartate: step 4/5. In terms of biological role, catalyzes the ATP-dependent phosphorylation of L-homoserine to L-homoserine phosphate. The polypeptide is Homoserine kinase (Shigella sonnei (strain Ss046)).